The chain runs to 555 residues: Formate--tetrahydrofolate ligase (555 aa).

Thr-65 to Thr-72 contacts ATP.

This sequence belongs to the formate--tetrahydrofolate ligase family.

The catalysed reaction is (6S)-5,6,7,8-tetrahydrofolate + formate + ATP = (6R)-10-formyltetrahydrofolate + ADP + phosphate. The protein operates within one-carbon metabolism; tetrahydrofolate interconversion. This chain is Formate--tetrahydrofolate ligase, found in Syntrophomonas wolfei subsp. wolfei (strain DSM 2245B / Goettingen).